Consider the following 195-residue polypeptide: Interferon tau-8 (195 aa).

Residues 1–23 form the signal peptide; the sequence is MAFVLSLLMALVLVSYGPGGSLG. 2 disulfide bridges follow: C24/C122 and C52/C162.

Belongs to the alpha/beta interferon family. IFN-alphaII subfamily. In terms of tissue distribution, constitutively and exclusively expressed in the mononuclear cells of the extraembryonic trophectoderm.

The protein localises to the secreted. In terms of biological role, paracrine hormone primarily responsible for maternal recognition of pregnancy. Interacts with endometrial receptors, probably type I interferon receptors, and blocks estrogen receptor expression, preventing the estrogen-induced increase in oxytocin receptor expression in the endometrium. This results in the suppression of the pulsatile endometrial release of the luteolytic hormone prostaglandin F2-alpha, hindering the regression of the corpus luteum (luteolysis) and therefore a return to ovarian cyclicity. This, and a possible direct effect of IFN-tau on prostaglandin synthesis, leads in turn to continued ovarian progesterone secretion, which stimulates the secretion by the endometrium of the nutrients required for the growth of the conceptus. In summary, displays particularly high antiviral and antiproliferative potency concurrently with particular weak cytotoxicity, high antiluteolytic activity and immunomodulatory properties. In contrast with other IFNs, IFN-tau is not virally inducible. This chain is Interferon tau-8 (IFNT8), found in Ovis aries (Sheep).